The following is a 326-amino-acid chain: tRNA-cytidine(32) 2-sulfurtransferase (326 aa).

The PP-loop motif motif lies at 63–68; sequence SGGKDS. Positions 138, 141, and 229 each coordinate [4Fe-4S] cluster.

It belongs to the TtcA family. As to quaternary structure, homodimer. Requires Mg(2+) as cofactor. The cofactor is [4Fe-4S] cluster.

The protein resides in the cytoplasm. It catalyses the reaction cytidine(32) in tRNA + S-sulfanyl-L-cysteinyl-[cysteine desulfurase] + AH2 + ATP = 2-thiocytidine(32) in tRNA + L-cysteinyl-[cysteine desulfurase] + A + AMP + diphosphate + H(+). Its pathway is tRNA modification. Its function is as follows. Catalyzes the ATP-dependent 2-thiolation of cytidine in position 32 of tRNA, to form 2-thiocytidine (s(2)C32). The sulfur atoms are provided by the cysteine/cysteine desulfurase (IscS) system. The sequence is that of tRNA-cytidine(32) 2-sulfurtransferase from Leptothrix cholodnii (strain ATCC 51168 / LMG 8142 / SP-6) (Leptothrix discophora (strain SP-6)).